Here is a 423-residue protein sequence, read N- to C-terminus: Histidinol dehydrogenase (423 aa).

Y116, Q177, and N200 together coordinate NAD(+). Substrate is bound by residues S223, Q245, and H248. Positions 245 and 248 each coordinate Zn(2+). Active-site proton acceptor residues include E313 and H314. Substrate contacts are provided by H314, D347, E401, and H406. D347 serves as a coordination point for Zn(2+). Residue H406 participates in Zn(2+) binding.

It belongs to the histidinol dehydrogenase family. Requires Zn(2+) as cofactor.

The catalysed reaction is L-histidinol + 2 NAD(+) + H2O = L-histidine + 2 NADH + 3 H(+). Its pathway is amino-acid biosynthesis; L-histidine biosynthesis; L-histidine from 5-phospho-alpha-D-ribose 1-diphosphate: step 9/9. Catalyzes the sequential NAD-dependent oxidations of L-histidinol to L-histidinaldehyde and then to L-histidine. This is Histidinol dehydrogenase from Staphylococcus saprophyticus subsp. saprophyticus (strain ATCC 15305 / DSM 20229 / NCIMB 8711 / NCTC 7292 / S-41).